The sequence spans 334 residues: MNTEATHDQNEAQTTGVRLRNAREQLGLSQQAVAERLCLKVSTVRDIEEDKAPSDLASTFLRGYIRSYARLVHVPEEELLPGLEKQAPLRAAKVAPMQSFSLGKRRKKRDGWLMSFTWLVLFVVVGLTGAWWWQNHKAQQEEITTMADQSTAELNADKDSGQSVPLDTRDATSQDTTPAQTAPAPATPVDSTAATQTPAPTAAATQNTVVAPSQANVDTAATSAAPAATETPSALPTSQAGVAAPAADPNALVMNFTADCWLEVTDATGKKLFSGMQRKDGNLNLTGQAPYKLKIGAPAAVQIQYQGKPVDLSRFIRTNQVARLTLNAEPTPAQ.

Over 1–111 the chain is Cytoplasmic; the sequence is MNTEATHDQN…LGKRRKKRDG (111 aa). The HTH cro/C1-type domain maps to 19-71; that stretch reads LRNAREQLGLSQQAVAERLCLKVSTVRDIEEDKAPSDLASTFLRGYIRSYARL. The segment at residues 30 to 49 is a DNA-binding region (H-T-H motif); the sequence is QQAVAERLCLKVSTVRDIEE. Residues 112-132 traverse the membrane as a helical; Signal-anchor for type II membrane protein segment; it reads WLMSFTWLVLFVVVGLTGAWW. The Periplasmic segment spans residues 133-334; sequence WQNHKAQQEE…TLNAEPTPAQ (202 aa). The tract at residues 154–241 is disordered; that stretch reads LNADKDSGQS…PSALPTSQAG (88 aa). 2 stretches are compositionally biased toward low complexity: residues 176 to 211 and 219 to 241; these read TTPAQTAPAPATPVDSTAATQTPAPTAAATQNTVVA and TAATSAAPAATETPSALPTSQAG.

It belongs to the RodZ family.

The protein resides in the cell inner membrane. Cytoskeletal protein that is involved in cell-shape control through regulation of the length of the long axis. The sequence is that of Cytoskeleton protein RodZ from Salmonella choleraesuis (strain SC-B67).